Here is a 369-residue protein sequence, read N- to C-terminus: Secondary metabolism regulator laeA (369 aa).

The segment at M1 to D37 is disordered. The segment covering D20–D37 has biased composition (low complexity).

It belongs to the methyltransferase superfamily. LaeA methyltransferase family. As to quaternary structure, component of the heterotrimeric velvet complex composed of laeA, veA and velB; VeA acting as a bridging protein between laeA and velB. Interacts directly with veA.

The protein resides in the nucleus. It carries out the reaction L-methionyl-[protein] + S-adenosyl-L-methionine = S-methyl-L-methionyl-[protein] + S-adenosyl-L-homocysteine. Methyltransferase that performs automethylation. No other methyl-accepting substrate has been identified yet. Component of the velvet transcription factor complex that acts as a global regulator for secondary metabolite gene expression. Required for aflR expression and subsequent aflatoxin production. Negatively regulates veA expression. Controls conidiophore and conidial development. Required for hydrophobin production which plays a role in cell surface hydrophobicity and host defense escape. In Aspergillus flavus (strain ATCC 200026 / FGSC A1120 / IAM 13836 / NRRL 3357 / JCM 12722 / SRRC 167), this protein is Secondary metabolism regulator laeA.